The chain runs to 346 residues: Probable dual-specificity RNA methyltransferase RlmN (346 aa).

Glu92 functions as the Proton acceptor in the catalytic mechanism. A Radical SAM core domain is found at 98-332 (TDQRLTVCVS…VSLRASRGLD (235 aa)). Cys105 and Cys337 are disulfide-bonded. 3 residues coordinate [4Fe-4S] cluster: Cys112, Cys116, and Cys119. S-adenosyl-L-methionine is bound by residues 159–160 (GE), Ser189, 218–220 (SLH), and Asn294. Catalysis depends on Cys337, which acts as the S-methylcysteine intermediate.

It belongs to the radical SAM superfamily. RlmN family. It depends on [4Fe-4S] cluster as a cofactor.

It localises to the cytoplasm. The enzyme catalyses adenosine(2503) in 23S rRNA + 2 reduced [2Fe-2S]-[ferredoxin] + 2 S-adenosyl-L-methionine = 2-methyladenosine(2503) in 23S rRNA + 5'-deoxyadenosine + L-methionine + 2 oxidized [2Fe-2S]-[ferredoxin] + S-adenosyl-L-homocysteine. It carries out the reaction adenosine(37) in tRNA + 2 reduced [2Fe-2S]-[ferredoxin] + 2 S-adenosyl-L-methionine = 2-methyladenosine(37) in tRNA + 5'-deoxyadenosine + L-methionine + 2 oxidized [2Fe-2S]-[ferredoxin] + S-adenosyl-L-homocysteine. Specifically methylates position 2 of adenine 2503 in 23S rRNA and position 2 of adenine 37 in tRNAs. This Synechococcus sp. (strain CC9311) protein is Probable dual-specificity RNA methyltransferase RlmN.